The primary structure comprises 329 residues: Glutamyl-Q tRNA(Asp) synthetase (329 aa).

Residues 8 to 12 (RLAPS) and E44 contribute to the L-glutamate site. A 'HIGH' region motif is present at residues 11–21 (PSPTGAQHLGN). Zn(2+)-binding residues include C100, C102, Y129, and C133. L-glutamate-binding residues include Y196 and R214. The short motif at 252–256 (RLAKR) is the 'KMSKS' region element. Residue K255 coordinates ATP.

This sequence belongs to the class-I aminoacyl-tRNA synthetase family. GluQ subfamily. Zn(2+) is required as a cofactor.

Catalyzes the tRNA-independent activation of glutamate in presence of ATP and the subsequent transfer of glutamate onto a tRNA(Asp). Glutamate is transferred on the 2-amino-5-(4,5-dihydroxy-2-cyclopenten-1-yl) moiety of the queuosine in the wobble position of the QUC anticodon. The sequence is that of Glutamyl-Q tRNA(Asp) synthetase from Rhodopirellula baltica (strain DSM 10527 / NCIMB 13988 / SH1).